Reading from the N-terminus, the 332-residue chain is Casein kinase I isoform 2 (332 aa).

The 272-residue stretch at 11–282 (FRIGQKIGSG…YLKRLFRELF (272 aa)) folds into the Protein kinase domain. ATP-binding positions include 17–25 (IGSGSFGEI) and Lys-40. Asp-133 functions as the Proton acceptor in the catalytic mechanism. The interval 306-332 (EGRADQQQQQQQQQQRRGSEKEDEHPV) is disordered. Residues 311–320 (QQQQQQQQQQ) show a composition bias toward low complexity. Positions 322–332 (RGSEKEDEHPV) are enriched in basic and acidic residues.

The protein belongs to the protein kinase superfamily. Ser/Thr protein kinase family. It depends on Mg(2+) as a cofactor.

The enzyme catalyses L-seryl-[protein] + ATP = O-phospho-L-seryl-[protein] + ADP + H(+). It carries out the reaction L-threonyl-[protein] + ATP = O-phospho-L-threonyl-[protein] + ADP + H(+). Serine/threonine protein kinase. May phosphorylate ZC3H11 during unstressed conditions, leading to proteasome-dependent degradation of ZC3H11. The polypeptide is Casein kinase I isoform 2 (Trypanosoma brucei brucei).